Reading from the N-terminus, the 143-residue chain is uncharacterized protein (143 aa).

Residues 1 to 14 (MPAAKKQIEEKPEV) are compositionally biased toward basic and acidic residues. Residues 1-25 (MPAAKKQIEEKPEVEQDLGAPDFSD) are disordered.

This is an uncharacterized protein from Pseudoalteromonas phage PM2 (Bacteriophage PM2).